A 139-amino-acid polypeptide reads, in one-letter code: Large ribosomal subunit protein uL16 (139 aa).

Belongs to the universal ribosomal protein uL16 family. In terms of assembly, part of the 50S ribosomal subunit.

Binds 23S rRNA and is also seen to make contacts with the A and possibly P site tRNAs. In Chlorobium chlorochromatii (strain CaD3), this protein is Large ribosomal subunit protein uL16.